The chain runs to 357 residues: SPbeta prophage-derived pesticidal crystal protein-like YokG (357 aa).

The protein belongs to the cry6A endotoxin family.

The sequence is that of SPbeta prophage-derived pesticidal crystal protein-like YokG (yokG) from Bacillus subtilis (strain 168).